Here is a 1483-residue protein sequence, read N- to C-terminus: Tyrosine-protein kinase BAZ1B (1483 aa).

Residues 20 to 126 (EPLFTIPHTQ…GEECDFEVGK (107 aa)) form the WAC domain. The disordered stretch occupies residues 145–212 (EEATEKKSDG…TSLKKGERKW (68 aa)). Basic and acidic residues-rich tracts occupy residues 148–165 (TEKK…DKEN) and 172–195 (DHQK…DRAR). Phosphoserine is present on residues Ser-152, Ser-158, and Ser-161. A C motif motif is present at residues 207 to 213 (KGERKWA). Thr-266 bears the Phosphothreonine mark. Positions 302–333 (NPSTKRKNTGSPDRKPSKKSKTDNSSLSSPLN) are disordered. Residues Ser-330, Ser-345, Ser-347, Ser-349, Ser-361, and Ser-374 each carry the phosphoserine modification. Disordered stretches follow at residues 379–432 (HTNF…KTPK) and 446–470 (GTQK…PHKH). Basic residues-rich tracts occupy residues 384 to 395 (IPKKGPPAKKPG) and 423 to 432 (SPKKGLKTPK). The stretch at 533 to 586 (KRWASMSEEQRKEYLKKKREELKKKLKEKAKERREKEMLERLEKQKRYEDQELT) forms a coiled coil. Positions 604–668 (NTLFGDVAMV…LQTLLQDEIA (65 aa)) constitute a DDT domain. Phosphoserine occurs at positions 699, 705, 708, and 716. Residues 768 to 814 (TRQQMSAELWKERLAVLKEENDKKRAEKQKRKEMEAKNKENGKVENG) adopt a coiled-coil conformation. Residues 788 to 810 (NDKKRAEKQKRKEMEAKNKENGK) show a composition bias toward basic and acidic residues. Positions 788-817 (NDKKRAEKQKRKEMEAKNKENGKVENGLGK) are disordered. A Glycyl lysine isopeptide (Lys-Gly) (interchain with G-Cter in SUMO1); alternate cross-link involves residue Lys-826. Lys-826 is covalently cross-linked (Glycyl lysine isopeptide (Lys-Gly) (interchain with G-Cter in SUMO2); alternate). Residues 850-893 (IQAKKEREIQEREMKVKLERQAEEERIRKHKAAAEKAFQEGIAK) are a coiled coil. A Glycyl lysine isopeptide (Lys-Gly) (interchain with G-Cter in SUMO2) cross-link involves residue Lys-853. The residue at position 947 (Ser-947) is a Phosphoserine. Residues Lys-1043, Lys-1089, and Lys-1107 each participate in a glycyl lysine isopeptide (Lys-Gly) (interchain with G-Cter in SUMO2) cross-link. Residues 1184–1234 (NARCKVCRKKGEDDKLILCDECNKAFHLFCLRPALYEVPDGEWQCPACQPA) form a PHD-type zinc finger. Residues 1237 to 1326 (RRNSRGRNYT…PKAPPVDDAE (90 aa)) are disordered. A coiled-coil region spans residues 1245–1283 (YTEESASEDSEDDESDEEEEEEEEEEEEEDYEVAGLRLR). Residues 1249-1276 (SASEDSEDDESDEEEEEEEEEEEEEDYE) show a composition bias toward acidic residues. 2 stretches are compositionally biased toward basic residues: residues 1282–1292 (LRPRKTIRGKH) and 1301–1316 (SGRR…RRSQ). The residue at position 1315 (Ser-1315) is a Phosphoserine. An N6-acetyllysine modification is found at Lys-1335. The region spanning 1339–1443 (RRQSLELQKC…QCLVALLHKH (105 aa)) is the Bromo domain. Ser-1342 and Ser-1468 each carry phosphoserine. A disordered region spans residues 1455–1483 (KKFPDRLAEDEGDSEPEAVGQSRGRRQKK).

Belongs to the WAL family. BAZ1B subfamily. In terms of assembly, component of the WICH-1 ISWI chromatin remodeling complex, at least composed of SMARCA1 and BAZ1B/WSTF, which regulates the spacing of histone octamers on the DNA template to facilitate access to DNA. Within the WICH-1 ISWI chromatin remodeling complex interacts with SMARCA1; the interaction is direct. Component of the WICH-5 ISWI chromatin remodeling complex (also called the WICH complex), at least composed of SMARCA5/SNF2H and BAZ1B/WSTF, which regulates the spacing of histone octamers on the DNA template to facilitate access to DNA. Within the WICH-5 ISWI chromatin remodeling complex interacts with SMARCA5/SNF2H; the interaction is direct. Component of the B-WICH chromatin remodeling complex, at least composed of SMARCA5/SNF2H, BAZ1B/WSTF, SF3B1, DEK, MYO1C, ERCC6, MYBBP1A and DDX21. Within the B-WICH chromatin remodeling complex, interacts with SMARCA5/SNF2H, DDX21, DEK, MYBBP1A, SF3B1, ERCC6 and MYO1C. Interacts with PCNA; the interaction is direct and is required for BAZ1B/WSTF binding to replication foci during S phase. Interacts with CDT1. Mn(2+) is required as a cofactor. Ubiquitously expressed with high levels of expression in heart, brain, placenta, skeletal muscle and ovary.

The protein resides in the nucleus. The enzyme catalyses L-tyrosyl-[protein] + ATP = O-phospho-L-tyrosyl-[protein] + ADP + H(+). Its function is as follows. Atypical tyrosine-protein kinase that plays a central role in chromatin remodeling and acts as a transcription regulator. Involved in DNA damage response by phosphorylating 'Tyr-142' of histone H2AX (H2AXY142ph). H2AXY142ph plays a central role in DNA repair and acts as a mark that distinguishes between apoptotic and repair responses to genotoxic stress. Regulatory subunit of the ATP-dependent WICH-1 and WICH-5 ISWI chromatin remodeling complexes, which form ordered nucleosome arrays on chromatin and facilitate access to DNA during DNA-templated processes such as DNA replication, transcription, and repair. Both complexes regulate the spacing of nucleosomes along the chromatin and have the ability to slide mononucleosomes to the center of a DNA template. The WICH-1 ISWI chromatin remodeling complex has a lower ATP hydrolysis rate than the WICH-5 ISWI chromatin remodeling complex. The WICH-5 ISWI chromatin-remodeling complex regulates the transcription of various genes, has a role in RNA polymerase I transcription. Within the B-WICH complex has a role in RNA polymerase III transcription. Mediates the recruitment of the WICH-5 ISWI chromatin remodeling complex to replication foci during DNA replication. The polypeptide is Tyrosine-protein kinase BAZ1B (BAZ1B) (Homo sapiens (Human)).